We begin with the raw amino-acid sequence, 340 residues long: Replication initiation protein (340 aa).

The disordered stretch occupies residues 38 to 58 (PERKRTKRRRGEHSTKPKCEN).

The sequence is that of Replication initiation protein (repA1) from Escherichia coli.